We begin with the raw amino-acid sequence, 506 residues long: ATP synthase subunit alpha (506 aa).

169–176 provides a ligand contact to ATP; sequence GDRQTGKT.

Belongs to the ATPase alpha/beta chains family. As to quaternary structure, F-type ATPases have 2 components, CF(1) - the catalytic core - and CF(0) - the membrane proton channel. CF(1) has five subunits: alpha(3), beta(3), gamma(1), delta(1), epsilon(1). CF(0) has three main subunits: a(1), b(2) and c(9-12). The alpha and beta chains form an alternating ring which encloses part of the gamma chain. CF(1) is attached to CF(0) by a central stalk formed by the gamma and epsilon chains, while a peripheral stalk is formed by the delta and b chains.

It is found in the cell membrane. It carries out the reaction ATP + H2O + 4 H(+)(in) = ADP + phosphate + 5 H(+)(out). In terms of biological role, produces ATP from ADP in the presence of a proton gradient across the membrane. The alpha chain is a regulatory subunit. The sequence is that of ATP synthase subunit alpha from Lawsonia intracellularis (strain PHE/MN1-00).